The sequence spans 367 residues: WD repeat-containing protein 31 (367 aa).

7 WD repeats span residues 53 to 90, 94 to 132, 137 to 175, 179 to 217, 221 to 264, 269 to 311, and 315 to 353; these read AFQE…AYNW, NVVK…MWDL, QPRQ…LWDV, QSVE…LWDS, QVAH…LWDL, NRIC…IWNQ, and ACLF…LLRM.

The polypeptide is WD repeat-containing protein 31 (WDR31) (Homo sapiens (Human)).